The primary structure comprises 287 residues: tRNA selenocysteine 1-associated protein 1 (287 aa).

RRM domains are found at residues 3–86 (ASLW…YATY) and 96–175 (YSLF…VAIP).

It belongs to the RRM TRSPAP family. As to quaternary structure, component of the tRNA(Sec) complex composed at least of EEFSEC, SECISBP2, SEPHS1, SEPSECS, TRNAU1AP and tRNA(Sec). Associates with mRNP and/or polysomes. Found in a complex with tRNA(Sec). Interacts with SEPSECS. As to expression, ubiquitous.

The protein localises to the nucleus. The protein resides in the cytoplasm. Its function is as follows. Involved in the early steps of selenocysteine biosynthesis and tRNA(Sec) charging to the later steps resulting in the cotranslational incorporation of selenocysteine into selenoproteins. Stabilizes the SECISBP2, EEFSEC and tRNA(Sec) complex. May be involved in the methylation of tRNA(Sec). Enhances efficiency of selenoproteins synthesis. This is tRNA selenocysteine 1-associated protein 1 (Trnau1ap) from Rattus norvegicus (Rat).